A 207-amino-acid chain; its full sequence is Large ribosomal subunit protein uL4 (207 aa).

The interval 45 to 80 is disordered; the sequence is RQGTHAVKNRSEVRGGGRKPWRQKGTGRARQGSTRS. Over residues 60–71 the composition is skewed to basic residues; the sequence is GGRKPWRQKGTG.

The protein belongs to the universal ribosomal protein uL4 family. In terms of assembly, part of the 50S ribosomal subunit.

In terms of biological role, one of the primary rRNA binding proteins, this protein initially binds near the 5'-end of the 23S rRNA. It is important during the early stages of 50S assembly. It makes multiple contacts with different domains of the 23S rRNA in the assembled 50S subunit and ribosome. Its function is as follows. Forms part of the polypeptide exit tunnel. The polypeptide is Large ribosomal subunit protein uL4 (Oceanobacillus iheyensis (strain DSM 14371 / CIP 107618 / JCM 11309 / KCTC 3954 / HTE831)).